A 202-amino-acid polypeptide reads, in one-letter code: Holliday junction branch migration complex subunit RuvA (202 aa).

The domain I stretch occupies residues 1-62 (MYEYLHGLIT…DTAQTLYGFS (62 aa)). A domain II region spans residues 63–141 (DFAEKQLFLK…DLAPATDDNT (79 aa)). The tract at residues 142–151 (LFTPEVAPTT) is flexible linker. Positions 152-202 (TENPQLADALAALTALGYRETAVKKITAQLRQFNGQTTNDYLSEGLRLLTK) are domain III.

This sequence belongs to the RuvA family. Homotetramer. Forms an RuvA(8)-RuvB(12)-Holliday junction (HJ) complex. HJ DNA is sandwiched between 2 RuvA tetramers; dsDNA enters through RuvA and exits via RuvB. An RuvB hexamer assembles on each DNA strand where it exits the tetramer. Each RuvB hexamer is contacted by two RuvA subunits (via domain III) on 2 adjacent RuvB subunits; this complex drives branch migration. In the full resolvosome a probable DNA-RuvA(4)-RuvB(12)-RuvC(2) complex forms which resolves the HJ.

It localises to the cytoplasm. The RuvA-RuvB-RuvC complex processes Holliday junction (HJ) DNA during genetic recombination and DNA repair, while the RuvA-RuvB complex plays an important role in the rescue of blocked DNA replication forks via replication fork reversal (RFR). RuvA specifically binds to HJ cruciform DNA, conferring on it an open structure. The RuvB hexamer acts as an ATP-dependent pump, pulling dsDNA into and through the RuvAB complex. HJ branch migration allows RuvC to scan DNA until it finds its consensus sequence, where it cleaves and resolves the cruciform DNA. This is Holliday junction branch migration complex subunit RuvA from Levilactobacillus brevis (strain ATCC 367 / BCRC 12310 / CIP 105137 / JCM 1170 / LMG 11437 / NCIMB 947 / NCTC 947) (Lactobacillus brevis).